The following is a 163-amino-acid chain: MSDPSFDVVSEISRPELTNAVTQALGEIKNRFDFKGSKSDIQLEDEQLVLTSDNEAKLESVIDVLVSKMAKRGLGLKNFDFKSKIEPATGGTVRMKVKIRKGMEKEQTKEVTRIVKESKLKVNATIMGECVRITGKKKDDLQEVIHLLKNSDLPFDVQFTNYK.

The protein belongs to the YajQ family.

Functionally, nucleotide-binding protein. This is Nucleotide-binding protein LA_3406 from Leptospira interrogans serogroup Icterohaemorrhagiae serovar Lai (strain 56601).